A 311-amino-acid polypeptide reads, in one-letter code: Olfactory receptor 10D1B (311 aa).

Residues Met1 to Met24 lie on the Extracellular side of the membrane. Residues Leu25–Leu45 traverse the membrane as a helical segment. The Cytoplasmic portion of the chain corresponds to Ala46 to His54. Residues Thr55–Ser75 form a helical membrane-spanning segment. Topologically, residues Ser76 to Cys95 are extracellular. Cysteines 95 and 187 form a disulfide. The chain crosses the membrane as a helical span at residues Val96 to Met116. Topologically, residues Ala117 to Arg137 are cytoplasmic. A helical membrane pass occupies residues Ile138–Thr158. Residues Thr159 to Thr192 lie on the Extracellular side of the membrane. A helical transmembrane segment spans residues Leu193 to Leu213. At Thr214 to Ser237 the chain is on the cytoplasmic side. A helical membrane pass occupies residues Thr238–Leu258. The Extracellular portion of the chain corresponds to Arg259–Gln271. A helical transmembrane segment spans residues Ile272–Leu288. Residues Arg289–Leu311 lie on the Cytoplasmic side of the membrane.

It belongs to the G-protein coupled receptor 1 family.

The protein localises to the cell membrane. Odorant receptor. The protein is Olfactory receptor 10D1B of Mus musculus (Mouse).